A 408-amino-acid chain; its full sequence is MNSNISAQNDSALNSTIQNGTKINQFIQPPWQIALWSVAYSIIVIVSLVGNIIVMWIIIAHKRMRTVTNYFLVNLAFAEASMSAFNTVINFTYAIHNHWYYGLIYCKFHNFFPISAVFTSIYSMTAIALDRYMAIIHPLKPRLSATATKIVICVIWSFSFCMAFPLGYYADVYPMEGGDICYLNWPDSEENRKYEQVYQVLVFCLIYILPLLVIGCAYTFIGMTLWASEIPGDSSDRYHEQVVAKRKVVKMMIVVVCTFAICWLPFHIFFLLQTLHEMTQKFYQQFYLAIMWLAMSSTMYNPIIYCCLNDRFRIGFKHVFRWCPFIRAGEYEGLELKSTRYLQTQSSMYKISRIETTVSSVLNTNDEEAEENGKSSKRLSLDLTSNGSSRSVCKTMSDSSSFYSNNLA.

Residues 1–32 (MNSNISAQNDSALNSTIQNGTKINQFIQPPWQ) are Extracellular-facing. N-linked (GlcNAc...) asparagine glycosylation is found at Asn-4, Asn-9, Asn-14, and Asn-19. The chain crosses the membrane as a helical span at residues 33-55 (IALWSVAYSIIVIVSLVGNIIVM). At 56–65 (WIIIAHKRMR) the chain is on the cytoplasmic side. The chain crosses the membrane as a helical span at residues 66–87 (TVTNYFLVNLAFAEASMSAFNT). Residues 88–107 (VINFTYAIHNHWYYGLIYCK) lie on the Extracellular side of the membrane. An intrachain disulfide couples Cys-106 to Cys-181. A helical transmembrane segment spans residues 108-129 (FHNFFPISAVFTSIYSMTAIAL). Over 130–149 (DRYMAIIHPLKPRLSATATK) the chain is Cytoplasmic. The chain crosses the membrane as a helical span at residues 150 to 170 (IVICVIWSFSFCMAFPLGYYA). The Extracellular portion of the chain corresponds to 171-196 (DVYPMEGGDICYLNWPDSEENRKYEQ). Residues 197–221 (VYQVLVFCLIYILPLLVIGCAYTFI) traverse the membrane as a helical segment. Topologically, residues 222 to 250 (GMTLWASEIPGDSSDRYHEQVVAKRKVVK) are cytoplasmic. Residues 251-272 (MMIVVVCTFAICWLPFHIFFLL) form a helical membrane-spanning segment. Residues 273–283 (QTLHEMTQKFY) lie on the Extracellular side of the membrane. A helical transmembrane segment spans residues 284–308 (QQFYLAIMWLAMSSTMYNPIIYCCL). The Cytoplasmic portion of the chain corresponds to 309–408 (NDRFRIGFKH…SSSFYSNNLA (100 aa)). Residue Cys-323 is the site of S-palmitoyl cysteine attachment. A disordered region spans residues 366-408 (DEEAEENGKSSKRLSLDLTSNGSSRSVCKTMSDSSSFYSNNLA). Over residues 382 to 408 (DLTSNGSSRSVCKTMSDSSSFYSNNLA) the composition is skewed to polar residues.

This sequence belongs to the G-protein coupled receptor 1 family.

The protein localises to the cell membrane. In terms of biological role, this is a receptor for the tachykinin neuropeptide substance P. It is probably associated with G proteins that activate a phosphatidylinositol-calcium second messenger system. In Aquarana catesbeiana (American bullfrog), this protein is Substance-P receptor (TACR1).